A 229-amino-acid chain; its full sequence is Uracil-DNA glycosylase (229 aa).

The Proton acceptor role is filled by D64.

The protein belongs to the uracil-DNA glycosylase (UDG) superfamily. UNG family.

It is found in the cytoplasm. It catalyses the reaction Hydrolyzes single-stranded DNA or mismatched double-stranded DNA and polynucleotides, releasing free uracil.. Functionally, excises uracil residues from the DNA which can arise as a result of misincorporation of dUMP residues by DNA polymerase or due to deamination of cytosine. The polypeptide is Uracil-DNA glycosylase (Escherichia coli O7:K1 (strain IAI39 / ExPEC)).